The primary structure comprises 430 residues: Aspartate--tRNA(Asp/Asn) ligase (430 aa).

Glu168 contributes to the L-aspartate binding site. Residues 190-193 (QLYK) are aspartate. Position 212 (Arg212) interacts with L-aspartate. ATP contacts are provided by residues 212–214 (RAE), 220–222 (RHL), and Glu353. Mg(2+) is bound by residues Glu353 and Ser356. L-aspartate-binding residues include Ser356 and Arg360. ATP is bound at residue 401 to 404 (GAER).

This sequence belongs to the class-II aminoacyl-tRNA synthetase family. Type 2 subfamily. As to quaternary structure, homodimer. It depends on Mg(2+) as a cofactor.

It is found in the cytoplasm. It catalyses the reaction tRNA(Asx) + L-aspartate + ATP = L-aspartyl-tRNA(Asx) + AMP + diphosphate. Its function is as follows. Aspartyl-tRNA synthetase with relaxed tRNA specificity since it is able to aspartylate not only its cognate tRNA(Asp) but also tRNA(Asn). Reaction proceeds in two steps: L-aspartate is first activated by ATP to form Asp-AMP and then transferred to the acceptor end of tRNA(Asp/Asn). This Archaeoglobus fulgidus (strain ATCC 49558 / DSM 4304 / JCM 9628 / NBRC 100126 / VC-16) protein is Aspartate--tRNA(Asp/Asn) ligase.